The following is a 448-amino-acid chain: Probable glycine dehydrogenase (decarboxylating) subunit 1 (448 aa).

This sequence belongs to the GcvP family. N-terminal subunit subfamily. As to quaternary structure, the glycine cleavage system is composed of four proteins: P, T, L and H. In this organism, the P 'protein' is a heterodimer of two subunits.

It carries out the reaction N(6)-[(R)-lipoyl]-L-lysyl-[glycine-cleavage complex H protein] + glycine + H(+) = N(6)-[(R)-S(8)-aminomethyldihydrolipoyl]-L-lysyl-[glycine-cleavage complex H protein] + CO2. Its function is as follows. The glycine cleavage system catalyzes the degradation of glycine. The P protein binds the alpha-amino group of glycine through its pyridoxal phosphate cofactor; CO(2) is released and the remaining methylamine moiety is then transferred to the lipoamide cofactor of the H protein. This Caulobacter vibrioides (strain ATCC 19089 / CIP 103742 / CB 15) (Caulobacter crescentus) protein is Probable glycine dehydrogenase (decarboxylating) subunit 1.